A 259-amino-acid polypeptide reads, in one-letter code: UPF0246 protein PBPRA0561 (259 aa).

The protein belongs to the UPF0246 family.

In Photobacterium profundum (strain SS9), this protein is UPF0246 protein PBPRA0561.